The sequence spans 291 residues: Beta-lactamase CTX-M-6 (291 aa).

The N-terminal stretch at 1–28 (MMTQSIRRSMLTVMATLPLLFSSATLHA) is a signal peptide. Ser-73 serves as the catalytic Acyl-ester intermediate. 237–239 (KTG) lines the substrate pocket.

The protein belongs to the class-A beta-lactamase family.

It catalyses the reaction a beta-lactam + H2O = a substituted beta-amino acid. Has cefotaxime-hydrolyzing activity. This Salmonella typhimurium protein is Beta-lactamase CTX-M-6 (bla).